We begin with the raw amino-acid sequence, 451 residues long: Phosphoglucosamine mutase (451 aa).

Catalysis depends on S102, which acts as the Phosphoserine intermediate. The Mg(2+) site is built by S102, D244, D246, and D248. At S102 the chain carries Phosphoserine.

It belongs to the phosphohexose mutase family. It depends on Mg(2+) as a cofactor. Activated by phosphorylation.

The enzyme catalyses alpha-D-glucosamine 1-phosphate = D-glucosamine 6-phosphate. Functionally, catalyzes the conversion of glucosamine-6-phosphate to glucosamine-1-phosphate. This chain is Phosphoglucosamine mutase, found in Lawsonia intracellularis (strain PHE/MN1-00).